We begin with the raw amino-acid sequence, 138 residues long: Large-conductance mechanosensitive channel (138 aa).

A run of 3 helical transmembrane segments spans residues 15–35 (VDLA…NSVV), 38–58 (IFMP…MFIQ), and 80–100 (GNFI…FFLV).

The protein belongs to the MscL family. Homopentamer.

The protein localises to the cell inner membrane. In terms of biological role, channel that opens in response to stretch forces in the membrane lipid bilayer. May participate in the regulation of osmotic pressure changes within the cell. The polypeptide is Large-conductance mechanosensitive channel (Bartonella bacilliformis (strain ATCC 35685 / KC583 / Herrer 020/F12,63)).